The following is a 203-amino-acid chain: Glycerol-3-phosphate acyltransferase (203 aa).

4 helical membrane-spanning segments follow: residues 6–26 (LTLL…AVLV), 82–102 (AISL…PIFF), 118–138 (APIG…LVLI), and 141–161 (YSSL…WWLD).

Belongs to the PlsY family. Probably interacts with PlsX.

The protein localises to the cell inner membrane. The catalysed reaction is an acyl phosphate + sn-glycerol 3-phosphate = a 1-acyl-sn-glycero-3-phosphate + phosphate. It functions in the pathway lipid metabolism; phospholipid metabolism. Functionally, catalyzes the transfer of an acyl group from acyl-phosphate (acyl-PO(4)) to glycerol-3-phosphate (G3P) to form lysophosphatidic acid (LPA). This enzyme utilizes acyl-phosphate as fatty acyl donor, but not acyl-CoA or acyl-ACP. In Shewanella sp. (strain MR-4), this protein is Glycerol-3-phosphate acyltransferase.